A 75-amino-acid chain; its full sequence is Small ribosomal subunit protein bS16c (75 aa).

This sequence belongs to the bacterial ribosomal protein bS16 family.

The protein localises to the plastid. The protein resides in the chloroplast. This chain is Small ribosomal subunit protein bS16c, found in Cyanidium caldarium (Red alga).